Consider the following 101-residue polypeptide: Small ribosomal subunit protein bS18c (101 aa).

This sequence belongs to the bacterial ribosomal protein bS18 family. Part of the 30S ribosomal subunit.

The protein localises to the plastid. The protein resides in the chloroplast. In Lactuca sativa (Garden lettuce), this protein is Small ribosomal subunit protein bS18c.